The chain runs to 125 residues: UPF0225 protein Cgl1438/cg1626 (125 aa).

It belongs to the UPF0225 family.

The protein is UPF0225 protein Cgl1438/cg1626 of Corynebacterium glutamicum (strain ATCC 13032 / DSM 20300 / JCM 1318 / BCRC 11384 / CCUG 27702 / LMG 3730 / NBRC 12168 / NCIMB 10025 / NRRL B-2784 / 534).